The following is a 630-amino-acid chain: Adenine DNA glycosylase (630 aa).

Over residues 54–72 (MRKCREKKEAEREAEREAE) the composition is skewed to basic and acidic residues. Positions 54–123 (MRKCREKKEA…ALGGDIEDLF (70 aa)) are disordered. A compositionally biased stretch (acidic residues) spans 73–123 (REAEEEEKAEEAEAEADKEEAEEESEEEEEEEEEEAEAEEEALGGDIEDLF). Glutamate 168 functions as the Proton donor/acceptor in the catalytic mechanism. The [4Fe-4S] cluster site is built by cysteine 341, cysteine 348, cysteine 351, and cysteine 357. The Nudix hydrolase domain occupies 383–536 (PRHDFCCVCV…RKVPPFRLQH (154 aa)). A Nudix box motif is present at residues 427-451 (VILNEEADSATRRNAINVYLKEAFR).

Belongs to the Nth/MutY family. The cofactor is [4Fe-4S] cluster.

The protein localises to the nucleus. The catalysed reaction is Hydrolyzes free adenine bases from 7,8-dihydro-8-oxoguanine:adenine mismatched double-stranded DNA, leaving an apurinic site.. Functionally, involved in oxidative DNA damage repair. Initiates repair of A*oxoG to C*G by removing the inappropriately paired adenine base from the DNA backbone. Possesses both adenine and 2-OH-A DNA glycosylase activities. The polypeptide is Adenine DNA glycosylase (MYH) (Arabidopsis thaliana (Mouse-ear cress)).